The sequence spans 65 residues: Large ribosomal subunit protein bL33m (65 aa).

A mitochondrion-targeting transit peptide spans 1 to 8; that stretch reads MFLSAVFF.

This sequence belongs to the bacterial ribosomal protein bL33 family. Component of the mitochondrial large ribosomal subunit (mt-LSU). Mature mammalian 55S mitochondrial ribosomes consist of a small (28S) and a large (39S) subunit. The 28S small subunit contains a 12S ribosomal RNA (12S mt-rRNA) and 30 different proteins. The 39S large subunit contains a 16S rRNA (16S mt-rRNA), a copy of mitochondrial valine transfer RNA (mt-tRNA(Val)), which plays an integral structural role, and 52 different proteins.

Its subcellular location is the mitochondrion. The protein is Large ribosomal subunit protein bL33m (MRPL33) of Homo sapiens (Human).